We begin with the raw amino-acid sequence, 845 residues long: MSDEQDKPTLSRKPLGLKRTVEAGQVQQQFSHGRRNTVVVEVKRRRVLGRPGEAAPTPEVEEAKAAPAPAPAPAAPRPAAPKPAAVDSLMTRQERQAQLLREAEEARMAALEENRRREEAERARAAEEERARAEKREEQAATKAPEPAPTPAASAPDATAADAPPAAEGPVETAARPATASAAPAPRRFTPVEALKRPEPKRPEPKASRGGENRRQSGKLTVTRALNEDEGARARSLAALKRAREKEKRSHMTSSGPREKQVREVVVPDTITVQELANRMAEKGADLVKALFKMGMPVTVNQTIDQDTAELLVTEFGHEIKRVSEADIDIRHDEDVDDAAQLKPRAPVVTIMGHVDHGKTSLLDALRGANVQAGEAGGITQHIGAYQVKAKDGSVITFLDTPGHEAFTEMRQRGANVTDIVILVVAADDGLKPQSIEAINHAKAAGVPIIVAINKVDKEGANPQRVRERLLEHELVVEEMGGDVQNVEVSALKKTGLDKLLDAIALQAEIMELKANPDRAAEGTVIEAKLDKGRGPVATILVRRGTLKVGDIFVCGAESGRVRALVDDHGKQVKQATPSMPVEVLGLGGVPMAGDTLIVVENEARAREVAAYRQEQALKKRTAQAPVSLEGMFSALADKANVIEYPVVIKGDVQGSVEAIVNALNKLSTDEIRVRVLHAGAGAITESDVTLAASTRAPIIGFNVRPNAKAREIANREKVRFLYYDVIYHLTADVAKEMAGELGPERIENVVGRAEVKDVFPAGKRDKAAGLLVLEGSIRKGLHARLTRDDVIVSATTIASLRRFKDDVAEVRAGLECGVVLADTNDIKPGDHLEVFEVELRERTL.

Positions 1–260 are disordered; that stretch reads MSDEQDKPTL…HMTSSGPREK (260 aa). The span at 68 to 81 shows a compositional bias: pro residues; it reads APAPAPAAPRPAAP. Over residues 101 to 140 the composition is skewed to basic and acidic residues; that stretch reads REAEEARMAALEENRRREEAERARAAEEERARAEKREEQA. 2 stretches are compositionally biased toward low complexity: residues 141 to 166 and 173 to 191; these read ATKAPEPAPTPAASAPDATAADAPPA and TAARPATASAAPAPRRFTP. A compositionally biased stretch (basic and acidic residues) spans 194 to 215; the sequence is ALKRPEPKRPEPKASRGGENRR. The tr-type G domain occupies 344–514; sequence PRAPVVTIMG…ALQAEIMELK (171 aa). Residues 353-360 form a G1 region; it reads GHVDHGKT. 353-360 contacts GTP; the sequence is GHVDHGKT. Residues 378–382 form a G2 region; it reads GITQH. The G3 stretch occupies residues 400 to 403; sequence DTPG. GTP-binding positions include 400–404 and 454–457; these read DTPGH and NKVD. The G4 stretch occupies residues 454–457; it reads NKVD. Positions 490–492 are G5; that stretch reads SAL.

It belongs to the TRAFAC class translation factor GTPase superfamily. Classic translation factor GTPase family. IF-2 subfamily.

The protein resides in the cytoplasm. In terms of biological role, one of the essential components for the initiation of protein synthesis. Protects formylmethionyl-tRNA from spontaneous hydrolysis and promotes its binding to the 30S ribosomal subunits. Also involved in the hydrolysis of GTP during the formation of the 70S ribosomal complex. The chain is Translation initiation factor IF-2 from Sphingopyxis alaskensis (strain DSM 13593 / LMG 18877 / RB2256) (Sphingomonas alaskensis).